We begin with the raw amino-acid sequence, 340 residues long: Guanine nucleotide-binding protein subunit beta-1 (340 aa).

WD repeat units follow at residues 53–83 (GHLA…IVWD), 95–125 (LRSS…SIYS), 141–170 (GHTG…ALWD), 182–212 (GHTG…KLWD), 224–254 (GHES…RLFD), 268–298 (NIIC…NVWD), and 310–340 (GHDN…KIWN).

Belongs to the WD repeat G protein beta family. As to quaternary structure, g proteins are composed of 3 units, alpha, beta and gamma. Interacts with G protein gamma subunits gpc-1 and gpc-2 and with egl-10 and eat-16. Interacts with goa-1 (in GDP-bound form).

Guanine nucleotide-binding proteins (G proteins) are involved as a modulator or transducer in various transmembrane signaling systems. The beta and gamma chains are required for the GTPase activity, for replacement of GDP by GTP, and for G protein-effector interaction. In the early embryo, controls the magnitude of the forces acting on centrosomes but is not required for generating asymmetric forces. In Caenorhabditis briggsae, this protein is Guanine nucleotide-binding protein subunit beta-1 (gpb-1).